A 165-amino-acid chain; its full sequence is Lipoprotein signal peptidase (165 aa).

4 helical membrane-spanning segments follow: residues 7–27, 28–48, 61–81, and 87–107; these read FFLLLGLIITVLLDQAIKYWI, THTMLLGTEIPLFPFISLYHV, FSHWGLIALTITIIVFLFWLW, and DKALSRFGIVLIIGGAIGNLI. Catalysis depends on residues D117 and D136. Residues 128 to 148 traverse the membrane as a helical segment; sequence SFAIFNLADTFITLGAISILI.

It belongs to the peptidase A8 family.

The protein localises to the cell inner membrane. It carries out the reaction Release of signal peptides from bacterial membrane prolipoproteins. Hydrolyzes -Xaa-Yaa-Zaa-|-(S,diacylglyceryl)Cys-, in which Xaa is hydrophobic (preferably Leu), and Yaa (Ala or Ser) and Zaa (Gly or Ala) have small, neutral side chains.. It functions in the pathway protein modification; lipoprotein biosynthesis (signal peptide cleavage). Its function is as follows. This protein specifically catalyzes the removal of signal peptides from prolipoproteins. This Bartonella bacilliformis (strain ATCC 35685 / KC583 / Herrer 020/F12,63) protein is Lipoprotein signal peptidase.